A 62-amino-acid polypeptide reads, in one-letter code: Temporin-CDYb (62 aa).

An N-terminal signal peptide occupies residues 1 to 22 (MFTLKKSLLLLFFLGTINLSLC). The propeptide occupies 23 to 45 (EEERDADEEERRDDPEERAVQVE). Leucine 60 carries the leucine amide modification.

Belongs to the frog skin active peptide (FSAP) family. Temporin subfamily. In terms of tissue distribution, expressed by the skin glands.

The protein localises to the secreted. Antimicrobial peptide. Has low activity against the Gram-positive bacterium S.aureus (MIC&gt;100 uM) and the Gram-negative bacterium E.coli (MIC&gt;100 uM). Has weak hemolytic activity against human erythrocytes. This chain is Temporin-CDYb, found in Rana dybowskii (Dybovsky's frog).